Consider the following 343-residue polypeptide: 3-oxopimeloyl-[acyl-carrier-protein] synthase (343 aa).

Active-site residues include C132 and H272. The segment at 273–277 (QANHR) is ACP-binding. The active site involves N302.

The protein belongs to the thiolase-like superfamily. BioZ family.

The enzyme catalyses malonyl-[ACP] + an acyl-CoA + H(+) = a 3-oxoacyl-[ACP] + CO2 + CoA. The catalysed reaction is glutaryl-CoA + malonyl-[ACP] + H(+) = 3-oxo-6-carboxyhexanoyl-[ACP] + CO2 + CoA. Its pathway is cofactor biosynthesis; biotin biosynthesis. Involved in the formation of the biotin precursor pimeloyl-ACP. Catalyzes the condensation of glutaryl-CoA, an intermediate in lysine degradation, with malonyl-ACP to produce 3-oxopimeloyl-ACP. The protein is 3-oxopimeloyl-[acyl-carrier-protein] synthase of Rhodothermus marinus (strain ATCC 43812 / DSM 4252 / R-10) (Rhodothermus obamensis).